We begin with the raw amino-acid sequence, 115 residues long: Large ribosomal subunit protein bL19 (115 aa).

The protein belongs to the bacterial ribosomal protein bL19 family.

Functionally, this protein is located at the 30S-50S ribosomal subunit interface and may play a role in the structure and function of the aminoacyl-tRNA binding site. The polypeptide is Large ribosomal subunit protein bL19 (Shouchella clausii (strain KSM-K16) (Alkalihalobacillus clausii)).